A 287-amino-acid chain; its full sequence is NAD-dependent protein deacylase sir-2.2 (287 aa).

Residues 10-287 (AELCENSLKK…YKISDVLKEM (278 aa)) enclose the Deacetylase sirtuin-type domain. NAD(+)-binding positions include 35–55 (GAGI…VGLY) and 116–119 (QNVD). H134 serves as the catalytic Proton acceptor. Zn(2+)-binding residues include C142, C145, C196, and C199. NAD(+)-binding positions include 236–238 (GTS), 262–264 (NIG), and I280.

It belongs to the sirtuin family. Class II subfamily. Interacts with pyc-1, pcca-1 and mccc-1. It depends on Zn(2+) as a cofactor. As to expression, ubiquitously expressed with high expression in the pharynx, body wall muscles and gonad.

Its subcellular location is the mitochondrion matrix. The protein localises to the mitochondrion. It carries out the reaction N(6)-acetyl-L-lysyl-[protein] + NAD(+) + H2O = 2''-O-acetyl-ADP-D-ribose + nicotinamide + L-lysyl-[protein]. Its function is as follows. NAD-dependent protein deacylase. Catalyzes the NAD-dependent hydrolysis of acyl groups from lysine residues. Plays a role in oxidative stress resistance. This is NAD-dependent protein deacylase sir-2.2 (sir-2.2) from Caenorhabditis elegans.